The chain runs to 540 residues: Anti-sigma-I factor RsgI7 (540 aa).

In terms of domain architecture, RsgI N-terminal anti-sigma spans 1–48 (MRAMVVDMNDKYAVVVNKEGQYIKIKRKAEHRLGYQVELPDRVIGFER). Over 1-50 (MRAMVVDMNDKYAVVVNKEGQYIKIKRKAEHRLGYQVELPDRVIGFERRT) the chain is Cytoplasmic. The chain crosses the membrane as a helical span at residues 51 to 73 (LLKVVSVAAALLIVSSISFAVYS). Over 74-540 (YNLPYSYVNV…PGKEILKKRC (467 aa)) the chain is Extracellular. 5 stretches are compositionally biased toward basic and acidic residues: residues 238 to 256 (DIKK…KKVN), 319 to 329 (SGIDKGNKDSK), 338 to 351 (NDVK…KTNS), 359 to 370 (VSKDNKNDKADG), and 398 to 419 (SKDD…EDNK). 2 disordered regions span residues 238–429 (DIKK…CPQY) and 481–540 (QEEQ…KKRC). A coiled-coil region spans residues 451 to 501 (KEDMTKQNDEWFKKMQEEQKKQYDEWLKKMQEEQKKQHDEWVKKMEEMKNT).

Interacts (via RsgI N-terminal anti-sigma domain) with SigI7.

It localises to the cell membrane. In terms of biological role, anti-sigma factor for SigI7. Negatively regulates SigI7 activity through direct interaction. The sequence is that of Anti-sigma-I factor RsgI7 from Acetivibrio thermocellus (strain ATCC 27405 / DSM 1237 / JCM 9322 / NBRC 103400 / NCIMB 10682 / NRRL B-4536 / VPI 7372) (Clostridium thermocellum).